We begin with the raw amino-acid sequence, 389 residues long: Chitin-binding protein CbpD (389 aa).

The first 25 residues, 1–25, serve as a signal peptide directing secretion; that stretch reads MKHYSATLALLPLTLALFLPQAAHA. The 183-residue stretch at 26 to 208 folds into the Chitin-binding type-4 domain; it reads HGSMETPPSR…EAFYACIDVS (183 aa).

In terms of processing, can be detected in the extracellular supernatant as a 43 kDa protein and a 23 kDa protein, both proteins have the same N-terminus. Only the larger protein binds chitin, which may protect it from further processing and/or degradation by elastase (lasB). It is not clear whether the short form is functional or a degradation product.

The protein localises to the secreted. Functionally, binds chitin but does not hydrolyze it, has no detectable protease or staphylolytic activity. The polypeptide is Chitin-binding protein CbpD (Pseudomonas aeruginosa (strain ATCC 15692 / DSM 22644 / CIP 104116 / JCM 14847 / LMG 12228 / 1C / PRS 101 / PAO1)).